The following is an 862-amino-acid chain: Probable linoleate 9S-lipoxygenase 5 (862 aa).

One can recognise a PLAT domain in the interval 36–161 (NDVNASLLDG…KYKSERIFFA (126 aa)). One can recognise a Lipoxygenase domain in the interval 164–862 (AYLPGETPEP…GKGIPNSVSI (699 aa)). Fe cation contacts are provided by H523, H528, H714, N718, and I862.

This sequence belongs to the lipoxygenase family. As to quaternary structure, monomer. The cofactor is Fe cation. Not detected in leaves, stems, flowers, roots, tubers and stolons during normal growth and development.

The protein localises to the cytoplasm. The enzyme catalyses (9Z,12Z)-octadecadienoate + O2 = (9S)-hydroperoxy-(10E,12Z)-octadecadienoate. It participates in lipid metabolism; oxylipin biosynthesis. In terms of biological role, plant lipoxygenases may be involved in a number of diverse aspects of plant physiology including growth and development, pest resistance, and senescence or responses to wounding. May contribute to cell death during the hypersensitive response (HR) by the massive production of free fatty acid hydroperoxides. Catalyzes the hydroperoxidation of lipids containing a cis,cis-1,4-pentadiene structure. The sequence is that of Probable linoleate 9S-lipoxygenase 5 (LOX1.5) from Solanum tuberosum (Potato).